The primary structure comprises 698 residues: DNA ligase (698 aa).

Residues 40-44 (DDVYD), 89-90 (SL), and glutamate 123 contribute to the NAD(+) site. The active-site N6-AMP-lysine intermediate is the lysine 125. Residues arginine 146, glutamate 184, lysine 300, and lysine 324 each coordinate NAD(+). Zn(2+)-binding residues include cysteine 417, cysteine 420, cysteine 435, and cysteine 441. A BRCT domain is found at 618–698 (SSASPVAGKA…EWLALTGAAD (81 aa)).

Belongs to the NAD-dependent DNA ligase family. LigA subfamily. Mg(2+) serves as cofactor. Mn(2+) is required as a cofactor.

It catalyses the reaction NAD(+) + (deoxyribonucleotide)n-3'-hydroxyl + 5'-phospho-(deoxyribonucleotide)m = (deoxyribonucleotide)n+m + AMP + beta-nicotinamide D-nucleotide.. Its function is as follows. DNA ligase that catalyzes the formation of phosphodiester linkages between 5'-phosphoryl and 3'-hydroxyl groups in double-stranded DNA using NAD as a coenzyme and as the energy source for the reaction. It is essential for DNA replication and repair of damaged DNA. This chain is DNA ligase, found in Paramagnetospirillum magneticum (strain ATCC 700264 / AMB-1) (Magnetospirillum magneticum).